The chain runs to 252 residues: Isoprenyl transferase (252 aa).

Residue Asp32 is part of the active site. Asp32 is a Mg(2+) binding site. Residues 33 to 36 (GNGR), Trp37, Arg45, His49, and 77 to 79 (STE) each bind substrate. Catalysis depends on Asn80, which acts as the Proton acceptor. Substrate contacts are provided by residues Trp81, Arg83, Arg200, and 206–208 (RLS). Glu219 serves as a coordination point for Mg(2+).

This sequence belongs to the UPP synthase family. Homodimer. Mg(2+) serves as cofactor.

Catalyzes the condensation of isopentenyl diphosphate (IPP) with allylic pyrophosphates generating different type of terpenoids. The sequence is that of Isoprenyl transferase from Listeria monocytogenes serovar 1/2a (strain ATCC BAA-679 / EGD-e).